The following is a 713-amino-acid chain: Probable arginine--tRNA ligase, cytoplasmic (713 aa).

Residues 74 to 113 are disordered; it reads KNKKNGVKATSTSSPSSSTSAPAEKKAKKDGKTGGAPPKQ. Low complexity predominate over residues 81–95; it reads KATSTSSPSSSTSAP. The segment covering 96-105 has biased composition (basic and acidic residues); the sequence is AEKKAKKDGK. Residues 252–254, histidine 263, tyrosine 438, aspartate 442, and glutamine 466 contribute to the L-arginine site; that span reads SPN. A 'HIGH' region motif is present at residues 252 to 263; sequence SPNIAKEMHVGH. The interval 583-597 is interaction with tRNA; the sequence is NTAVYLLYAYTRIQS.

Belongs to the class-I aminoacyl-tRNA synthetase family.

The protein resides in the cytoplasm. It localises to the cytosol. It catalyses the reaction tRNA(Arg) + L-arginine + ATP = L-arginyl-tRNA(Arg) + AMP + diphosphate. Forms part of a macromolecular complex that catalyzes the attachment of specific amino acids to cognate tRNAs during protein synthesis. The chain is Probable arginine--tRNA ligase, cytoplasmic from Caenorhabditis elegans.